Consider the following 251-residue polypeptide: 1-(5-phosphoribosyl)-5-[(5-phosphoribosylamino)methylideneamino] imidazole-4-carboxamide isomerase (251 aa).

Asp8 acts as the Proton acceptor in catalysis. Asp131 functions as the Proton donor in the catalytic mechanism.

The protein belongs to the HisA/HisF family.

It localises to the cytoplasm. It catalyses the reaction 1-(5-phospho-beta-D-ribosyl)-5-[(5-phospho-beta-D-ribosylamino)methylideneamino]imidazole-4-carboxamide = 5-[(5-phospho-1-deoxy-D-ribulos-1-ylimino)methylamino]-1-(5-phospho-beta-D-ribosyl)imidazole-4-carboxamide. Its pathway is amino-acid biosynthesis; L-histidine biosynthesis; L-histidine from 5-phospho-alpha-D-ribose 1-diphosphate: step 4/9. This chain is 1-(5-phosphoribosyl)-5-[(5-phosphoribosylamino)methylideneamino] imidazole-4-carboxamide isomerase, found in Burkholderia pseudomallei (strain 1710b).